The primary structure comprises 520 residues: Cytochrome P450 72A397 (520 aa).

A helical membrane pass occupies residues 14 to 34; the sequence is AVAVAVVVVGWAWKVLNWVWV. Residue C468 participates in heme binding.

Belongs to the cytochrome P450 family. The cofactor is heme.

The protein resides in the membrane. The enzyme catalyses oleanolate + reduced [NADPH--hemoprotein reductase] + O2 = hederagenin + oxidized [NADPH--hemoprotein reductase] + H2O + H(+). In terms of biological role, catalyzes the oxidation of oleanolate at the C-23 position to form hederagenin. The chain is Cytochrome P450 72A397 from Kalopanax septemlobus (Castor aralia).